Here is a 482-residue protein sequence, read N- to C-terminus: MSTSSHACPVPAVRGHMTHYPAAPYPLLFPPVIRGLSLPPLHGLHGHPPPSGCSTPSPASVGQACQRTTGGSQFAASTKWTPSLNAAIETQSTSSEELVPSPPSPLPPPRVYKPCFVCQDKSSGYHYGVSACEGCKGFFRRSIQKNMIYTCHRDKNCVINKVTRNRCQYCRLQKCFEVGMSKESVRNDRNKKKKEPSKQECTESYEMTAELDDLTEKIRKAHQETFPSLCQLGKYTTNSSADHRVRLDLGLWDKFSELATKCIIKIVEFAKRLPGFTGLTIADQITLLKAACLDILILRICTRYTPEQDTMTFSDGLTLNRTQMHNAGFGPLTDLVFTFANQLLPLEMDDTETGLLSAICLICGDRQDLEEPTKVDKLQEPLLEALKIYIRKRRPSKPHMFPKILMKITDLRSISAKGAERVITLKMEIPGSMPPLIQEMLENSEGHEPLTPSSSGNIAEHSPSVSPSSVENSGVSQSPLLQ.

Residues 1–114 (MSTSSHACPV…PLPPPRVYKP (114 aa)) form a modulating region. Serine 104 carries the post-translational modification Phosphoserine. NR C4-type zinc fingers lie at residues 115–135 (CFVCQDKSSGYHYGVSACEGC) and 151–175 (CHRDKNCVINKVTRNRCQYCRLQKC). The segment at residues 115 to 180 (CFVCQDKSSG…RLQKCFEVGM (66 aa)) is a DNA-binding region (nuclear receptor). The segment at 181-209 (SKESVRNDRNKKKKEPSKQECTESYEMTA) is hinge. Residues 210–444 (ELDDLTEKIR…PLIQEMLENS (235 aa)) enclose the NR LBD domain. The disordered stretch occupies residues 443-482 (NSEGHEPLTPSSSGNIAEHSPSVSPSSVENSGVSQSPLLQ). The segment covering 462–482 (SPSVSPSSVENSGVSQSPLLQ) has biased composition (low complexity).

This sequence belongs to the nuclear hormone receptor family. NR1 subfamily. Homodimer. Heterodimer; with a RXR molecule. Binds DNA preferentially as a RAR/RXR heterodimer. Heterodimerizes (via NR LBD) with RXRA. Interacts weakly with NCOR2.

It localises to the nucleus. Its subcellular location is the cytoplasm. In terms of biological role, receptor for retinoic acid. Retinoic acid receptors bind as heterodimers to their target response elements in response to their ligands, all-trans or 9-cis retinoic acid, and regulate gene expression in various biological processes. The RAR/RXR heterodimers bind to the retinoic acid response elements (RARE) composed of tandem 5'-AGGTCA-3' sites known as DR1-DR5. In the absence of ligand, acts mainly as an activator of gene expression due to weak binding to corepressors. The RXRA/RARB heterodimer can act as a repressor on the DR1 element and as an activator on the DR5 element. In concert with RARG, required for skeletal growth, matrix homeostasis and growth plate function. This is Retinoic acid receptor beta (Rarb) from Mus musculus (Mouse).